The chain runs to 121 residues: Ribosome-binding factor A (121 aa).

Belongs to the RbfA family. In terms of assembly, monomer. Binds 30S ribosomal subunits, but not 50S ribosomal subunits or 70S ribosomes.

The protein localises to the cytoplasm. In terms of biological role, one of several proteins that assist in the late maturation steps of the functional core of the 30S ribosomal subunit. Associates with free 30S ribosomal subunits (but not with 30S subunits that are part of 70S ribosomes or polysomes). Required for efficient processing of 16S rRNA. May interact with the 5'-terminal helix region of 16S rRNA. This is Ribosome-binding factor A from Oenococcus oeni (strain ATCC BAA-331 / PSU-1).